The chain runs to 631 residues: tRNA uridine 5-carboxymethylaminomethyl modification enzyme MnmG (631 aa).

An FAD-binding site is contributed by 14 to 19 (GGGHAG). 274–288 (GPRYCPSIEDKIHRF) is an NAD(+) binding site.

Belongs to the MnmG family. In terms of assembly, homodimer. Heterotetramer of two MnmE and two MnmG subunits. Requires FAD as cofactor.

It is found in the cytoplasm. Its function is as follows. NAD-binding protein involved in the addition of a carboxymethylaminomethyl (cmnm) group at the wobble position (U34) of certain tRNAs, forming tRNA-cmnm(5)s(2)U34. This is tRNA uridine 5-carboxymethylaminomethyl modification enzyme MnmG from Pseudomonas paraeruginosa (strain DSM 24068 / PA7) (Pseudomonas aeruginosa (strain PA7)).